Consider the following 105-residue polypeptide: Co-chaperonin GroES 3 (105 aa).

This sequence belongs to the GroES chaperonin family. As to quaternary structure, heptamer of 7 subunits arranged in a ring. Interacts with the chaperonin GroEL.

The protein resides in the cytoplasm. Its function is as follows. Together with the chaperonin GroEL, plays an essential role in assisting protein folding. The GroEL-GroES system forms a nano-cage that allows encapsulation of the non-native substrate proteins and provides a physical environment optimized to promote and accelerate protein folding. GroES binds to the apical surface of the GroEL ring, thereby capping the opening of the GroEL channel. The chain is Co-chaperonin GroES 3 from Rhizobium meliloti (strain 1021) (Ensifer meliloti).